The primary structure comprises 293 residues: Oxidoreductase R2 (293 aa).

The protein belongs to the asaB hydroxylase/desaturase family.

Its pathway is secondary metabolite biosynthesis. Its function is as follows. Oxidoreductase; part of the gene cluster that mediates the biosynthesis of squalestatin S1 (SQS1, also known as zaragozic acid A), a heavily oxidized fungal polyketide that offers potent cholesterol lowering activity by targeting squalene synthase (SS). SQS1 is composed of a 2,8-dioxobicyclic[3.2.1]octane-3,4,5-tricarboxyclic acid core that is connected to two lipophilic polyketide arms. These initial steps feature the priming of an unusual benzoic acid starter unit onto the highly reducing polyketide synthase pks2, followed by oxaloacetate extension and product release to generate a tricarboxylic acid containing product. The phenylalanine ammonia lyase (PAL) M7 and the acyl-CoA ligase M9 are involved in transforming phenylalanine into benzoyl-CoA. The citrate synthase-like protein R3 is involved in connecting the C-alpha-carbons of the hexaketide chain and oxaloacetate to afford the tricarboxylic acid unit. The potential hydrolytic enzymes, M8 and M10, are in close proximity to pks2 and may participate in product release. On the other side, the tetraketide arm is synthesized by a the squalestatin tetraketide synthase pks1 and enzymatically esterified to the core in the last biosynthetic step, by the acetyltransferase M4. The biosynthesis of the tetraketide must involve 3 rounds of chain extension. After the first and second rounds methyl-transfer occurs, and in all rounds of extension the ketoreductase and dehydratase are active. The enoyl reductase and C-MeT of pks1 are not active in the final round of extension. The acetyltransferase M4 appears to have a broad substrate selectivity for its acyl CoA substrate, allowing the in vitro synthesis of novel squalestatins. The biosynthesis of SQS1 requires several oxidative steps likely performed by oxidoreductases M1, R1 and R2. Finally, in support of the identification of the cluster as being responsible for SQS1 production, the cluster contains a gene encoding a putative squalene synthase (SS) R6, suggesting a likely mechanism for self-resistance. In Phoma sp. (strain ATCC 20986 / MF5453), this protein is Oxidoreductase R2.